A 725-amino-acid chain; its full sequence is Ribosomal RNA large subunit methyltransferase K/L (725 aa).

Positions 46–157 (VAYRLCLWSR…RGQATLSLDL (112 aa)) constitute a THUMP domain. The segment at 393-412 (TGERGERNDDGQARAPSEPA) is disordered. Positions 395-404 (ERGERNDDGQ) are enriched in basic and acidic residues.

The protein belongs to the methyltransferase superfamily. RlmKL family.

The protein resides in the cytoplasm. The enzyme catalyses guanosine(2445) in 23S rRNA + S-adenosyl-L-methionine = N(2)-methylguanosine(2445) in 23S rRNA + S-adenosyl-L-homocysteine + H(+). The catalysed reaction is guanosine(2069) in 23S rRNA + S-adenosyl-L-methionine = N(2)-methylguanosine(2069) in 23S rRNA + S-adenosyl-L-homocysteine + H(+). Its function is as follows. Specifically methylates the guanine in position 2445 (m2G2445) and the guanine in position 2069 (m7G2069) of 23S rRNA. The polypeptide is Ribosomal RNA large subunit methyltransferase K/L (Pseudomonas paraeruginosa (strain DSM 24068 / PA7) (Pseudomonas aeruginosa (strain PA7))).